A 1280-amino-acid polypeptide reads, in one-letter code: MSRAHAAYANEGWSAPEGGIAGKDGSTRDCSGYGSQGPLFSAEEEVKGTVVRETVGPIEIFRYADATDRVLMIAGTAFAVACGAGMPVFSFIFGRIAMDLMSGVGSAEEKAAKTSLIMVYVGIAMLIACAGHVMCWTVAACRQVARIRLLFFRAVLRQDIGWHDEHSPGALTARMTGDTRVIQNGINDKLSQGIMNGSMGVIGYIAGFVFSWELTLMMIGMMPFIIVMAAIIGSIVSKITESSRKYFAKAGSLATEVMENIRTVQAFGREDYELERFTKAVLYAQGRGIRKELASNLSAAVIMALMYVSYTVAFFFGSYLVEWGRRDMADIISTFLAVLMGSFGLGFVAPSRTAFTESRAAAYEIFKAIDRVPPVDIDAGGVPVPGFKESIEFRNVRFAYPTRPGMILFRDLSLKIKCGQKVAFSGASGCGKSSVIGLIQRFYDPIGGAVLVDGVRMRELCLREWRDQIGIVSQEPNLFAGTMMENVRMGKPNATDEEVVEACRQANIHDTIMALPDRYDTPVGPVGSLLSGGQKQRIAIARALVKRPPILLLDEATSALDRKSEMEVQAALDQLIQRGGTTVVVIAHRLATIRDMDRIYYVKHDGAEGSRITESGTFDELLELDGEFAAVAKMQGVLAGDAKSGASVRDAKKASGHLGVILDEADLAQLDEDVPRTARQNVPIDELAKWEVKHAKVGFLRLMRMNKDKAWAVALGILSSVVIGSARPASSIVMGHMLRVLGEYSATKDVEALRSGTNLYAPLFIVFAVANFSGWILHGFYGYAGEHLTTKIRVLLFRQIMRQDINFFDIPGRDAGTLAGMLSGDCEAVHQLWGPSIGLKVQTMCIIASGLVVGFIYQWKLALVALACMPLMIGCSLTRRLMINGYTKSREGDTDDTIVTEALSNVRTVTSLNMKEDCVEAFQAALREEAPRSVRKGIIAGGIYGITQFIFYGVYALCFWYGSKLIDKGEAEFKDVMIASMSILFGAQNAGEAGAFATKLADAEASAKRVFSVIDRVPDVDIEQAGNKDLGEGCDIEYRNVQFIYSARPKQVVLASVNMRFGDATSNGLIGQTGCGKSTVIQMLARFYERRSGLISVNGRDLSSLDIAEWRRNISIVLQEPNLFSGTVRENIRYAREGATDEEVEEAARLAHIHHEIIKWTDGYDTEVGYKGRALSGGQKQRIAIARGLLRRPRLLLLDEATSALDSVTEAKVQEGIEAFQAKYKVTTVSIAHRLTTIRHCDQIILLDSGCIIEQGSHEELMALGGEYKTRYDLYMSALS.

Residues 1–72 lie on the Cytoplasmic side of the membrane; sequence MSRAHAAYAN…YADATDRVLM (72 aa). The ABC transmembrane type-1 1 domain maps to 72–357; sequence MIAGTAFAVA…VAPSRTAFTE (286 aa). 6 consecutive transmembrane segments (helical) span residues 73–93, 120–140, 189–209, 216–236, 297–317, and 326–345; these read IAGT…SFIF, YVGI…TVAA, KLSQ…AGFV, LMMI…GSIV, LSAA…FFFG, and RDMA…SFGL. At 346–712 the chain is on the cytoplasmic side; that stretch reads GFVAPSRTAF…MRMNKDKAWA (367 aa). An ABC transporter 1 domain is found at 391–634; that stretch reads IEFRNVRFAY…DGEFAAVAKM (244 aa). 426–433 contributes to the ATP binding site; sequence GASGCGKS. Transmembrane regions (helical) follow at residues 713-733, 762-781, 837-857, 858-878, 938-958, and 976-996; these read VALG…SSIV, PLFI…HGFY, IGLK…GFIY, QWKL…CSLT, IIAG…YALC, and VMIA…AGAF. Positions 713 to 1002 constitute an ABC transmembrane type-1 2 domain; that stretch reads VALGILSSVV…AGAFATKLAD (290 aa). An ABC transporter 2 domain is found at 1036–1274; it reads IEYRNVQFIY…GGEYKTRYDL (239 aa). 1071–1078 serves as a coordination point for ATP; it reads GQTGCGKS. An N-linked (GlcNAc...) asparagine glycan is attached at Asn-1113.

Belongs to the ABC transporter superfamily. ABCB family. Multidrug resistance exporter (TC 3.A.1.201) subfamily.

It localises to the membrane. It carries out the reaction ATP + H2O + xenobioticSide 1 = ADP + phosphate + xenobioticSide 2.. Its function is as follows. Energy-dependent efflux pump responsible for decreased drug accumulation in multi-drug-resistant cells. Confers vinblastine resistance. The polypeptide is Multidrug resistance protein 1 (MDR1) (Leishmania enriettii).